Consider the following 421-residue polypeptide: MDKIVIKGGNKLTGEVKVEGAKNAVLPILTASLLASDKPSKLVNVPALSDVETINNVLTTLNADVTYKKDENAVVVDATKTLNEEAPYEYVSKMRASILVMGPLLARLGHAIVALPGGCAIGSRPIEQHIKGFEALGAEIHLENGNIYANAKDGLKGTSIHLDFPSVGATQNIIMAASLAKGKTLIENAAKEPEIVDLANYINEMGGRITGAGTDTITINGVESLHGVEHAIIPDRIEAGTLLIAGAITRGDIFVRGAIKEHMASLVYKLEEMGVELEYQEDGIRVRAEGDLQPVDIKTLPHPGFPTDMQSQMMALLLTANGHKVVTETVFENRFMHVAEFKRMNANINVEGRSAKLEGKSQLQGAQVKATDLRAAAALILAGLVADGKTSVTELTHLDRGYVDLHGKLKQLGADIERIND.

Position 22-23 (22-23) interacts with phosphoenolpyruvate; it reads KN. Arg95 is a UDP-N-acetyl-alpha-D-glucosamine binding site. Cys119 acts as the Proton donor in catalysis. Cys119 carries the 2-(S-cysteinyl)pyruvic acid O-phosphothioketal modification. Residues 124-128, Asp308, and Val330 contribute to the UDP-N-acetyl-alpha-D-glucosamine site; that span reads RPIEQ.

It belongs to the EPSP synthase family. MurA subfamily.

It localises to the cytoplasm. The catalysed reaction is phosphoenolpyruvate + UDP-N-acetyl-alpha-D-glucosamine = UDP-N-acetyl-3-O-(1-carboxyvinyl)-alpha-D-glucosamine + phosphate. The protein operates within cell wall biogenesis; peptidoglycan biosynthesis. Cell wall formation. Adds enolpyruvyl to UDP-N-acetylglucosamine. The sequence is that of UDP-N-acetylglucosamine 1-carboxyvinyltransferase 1 from Staphylococcus aureus (strain MRSA252).